Here is a 209-residue protein sequence, read N- to C-terminus: Large ribosomal subunit protein uL3 (209 aa).

An N5-methylglutamine modification is found at Q150.

Belongs to the universal ribosomal protein uL3 family. Part of the 50S ribosomal subunit. Forms a cluster with proteins L14 and L19. In terms of processing, methylated by PrmB.

In terms of biological role, one of the primary rRNA binding proteins, it binds directly near the 3'-end of the 23S rRNA, where it nucleates assembly of the 50S subunit. This is Large ribosomal subunit protein uL3 from Cronobacter sakazakii (strain ATCC BAA-894) (Enterobacter sakazakii).